Here is a 354-residue protein sequence, read N- to C-terminus: tRNA N6-adenosine threonylcarbamoyltransferase (354 aa).

Positions 115 and 119 each coordinate Fe cation. Substrate is bound by residues 138–142 (LVSGG), D171, G184, and N276. D304 contacts Fe cation.

The protein belongs to the KAE1 / TsaD family. Fe(2+) is required as a cofactor.

It localises to the cytoplasm. It carries out the reaction L-threonylcarbamoyladenylate + adenosine(37) in tRNA = N(6)-L-threonylcarbamoyladenosine(37) in tRNA + AMP + H(+). Functionally, required for the formation of a threonylcarbamoyl group on adenosine at position 37 (t(6)A37) in tRNAs that read codons beginning with adenine. Is involved in the transfer of the threonylcarbamoyl moiety of threonylcarbamoyl-AMP (TC-AMP) to the N6 group of A37, together with TsaE and TsaB. TsaD likely plays a direct catalytic role in this reaction. This chain is tRNA N6-adenosine threonylcarbamoyltransferase, found in Xanthomonas oryzae pv. oryzae (strain MAFF 311018).